The chain runs to 347 residues: UPF0284 protein M1627_0030 (347 aa).

This sequence belongs to the UPF0284 family.

In Saccharolobus islandicus (strain M.16.27) (Sulfolobus islandicus), this protein is UPF0284 protein M1627_0030.